A 505-amino-acid polypeptide reads, in one-letter code: 2,3-bisphosphoglycerate-independent phosphoglycerate mutase (505 aa).

Asp12 and Ser62 together coordinate Mn(2+). The active-site Phosphoserine intermediate is Ser62. Residues His123, 153–154 (RD), Arg185, Arg191, 257–260 (RPDR), and Lys330 contribute to the substrate site. Asp397, His401, Asp438, His439, and His456 together coordinate Mn(2+).

The protein belongs to the BPG-independent phosphoglycerate mutase family. In terms of assembly, monomer. The cofactor is Mn(2+).

It catalyses the reaction (2R)-2-phosphoglycerate = (2R)-3-phosphoglycerate. It participates in carbohydrate degradation; glycolysis; pyruvate from D-glyceraldehyde 3-phosphate: step 3/5. Functionally, catalyzes the interconversion of 2-phosphoglycerate and 3-phosphoglycerate. This chain is 2,3-bisphosphoglycerate-independent phosphoglycerate mutase, found in Staphylococcus aureus (strain MRSA252).